The sequence spans 525 residues: Chromosomal replication initiator protein DnaA (525 aa).

Residues 1 to 71 (MNDFWQHCSA…SDLAREFWNT (71 aa)) are domain I, interacts with DnaA modulators. The domain II stretch occupies residues 71-188 (TPIEVQFVLD…GEADSMYERS (118 aa)). The segment at 160-182 (AAAGRRTWRPGPGAAPANGGEAD) is disordered. Residues 169-181 (PGPGAAPANGGEA) are compositionally biased toward low complexity. The segment at 189-405 (KLNPVLTFDN…GALRKILAYS (217 aa)) is domain III, AAA+ region. G233, G235, K236, and T237 together coordinate ATP. The segment at 406 to 525 (KFHGREISIE…LHVLEQTLKG (120 aa)) is domain IV, binds dsDNA.

The protein belongs to the DnaA family. As to quaternary structure, oligomerizes as a right-handed, spiral filament on DNA at oriC.

It is found in the cytoplasm. In terms of biological role, plays an essential role in the initiation and regulation of chromosomal replication. ATP-DnaA binds to the origin of replication (oriC) to initiate formation of the DNA replication initiation complex once per cell cycle. Binds the DnaA box (a 9 base pair repeat at the origin) and separates the double-stranded (ds)DNA. Forms a right-handed helical filament on oriC DNA; dsDNA binds to the exterior of the filament while single-stranded (ss)DNA is stabiized in the filament's interior. The ATP-DnaA-oriC complex binds and stabilizes one strand of the AT-rich DNA unwinding element (DUE), permitting loading of DNA polymerase. After initiation quickly degrades to an ADP-DnaA complex that is not apt for DNA replication. Binds acidic phospholipids. This Burkholderia orbicola (strain MC0-3) protein is Chromosomal replication initiator protein DnaA.